Consider the following 243-residue polypeptide: NH(3)-dependent NAD(+) synthetase (243 aa).

31-38 (GLSGGVDS) contacts ATP. Aspartate 37 contributes to the Mg(2+) binding site. Arginine 116 provides a ligand contact to deamido-NAD(+). Threonine 136 contributes to the ATP binding site. A Mg(2+)-binding site is contributed by glutamate 141. The deamido-NAD(+) site is built by lysine 149 and aspartate 156. Positions 165 and 187 each coordinate ATP. A deamido-NAD(+)-binding site is contributed by 233–234 (HK).

It belongs to the NAD synthetase family. Homodimer.

It carries out the reaction deamido-NAD(+) + NH4(+) + ATP = AMP + diphosphate + NAD(+) + H(+). Its pathway is cofactor biosynthesis; NAD(+) biosynthesis; NAD(+) from deamido-NAD(+) (ammonia route): step 1/1. Catalyzes the ATP-dependent amidation of deamido-NAD to form NAD. Uses ammonia as a nitrogen source. The sequence is that of NH(3)-dependent NAD(+) synthetase from Carboxydothermus hydrogenoformans (strain ATCC BAA-161 / DSM 6008 / Z-2901).